Reading from the N-terminus, the 311-residue chain is Endosome-associated-trafficking regulator 1 (311 aa).

The stretch at 167–278 forms a coiled coil; it reads RGNAENGTKN…KSENERLRLG (112 aa).

It belongs to the ENTR1 family.

The protein resides in the cytoplasm. It is found in the early endosome. It localises to the endosome. The protein localises to the recycling endosome. Its subcellular location is the midbody. The protein resides in the cytoskeleton. It is found in the microtubule organizing center. It localises to the centrosome. The protein localises to the cilium basal body. Functionally, endosome-associated protein that plays a role in membrane receptor sorting, cytokinesis and ciliogenesis. The protein is Endosome-associated-trafficking regulator 1 of Danio rerio (Zebrafish).